A 270-amino-acid polypeptide reads, in one-letter code: Phosphatidylglycerol--prolipoprotein diacylglyceryl transferase (270 aa).

3 helical membrane-spanning segments follow: residues 17-37 (LAIH…MFLG), 63-83 (ILFL…CLFY), and 95-115 (IFYI…VIAS). A 1,2-diacyl-sn-glycero-3-phospho-(1'-sn-glycerol) is bound at residue Arg146. A run of 3 helical transmembrane segments spans residues 182 to 202 (SQVY…WLYA), 209 to 229 (GEVA…AEYF), and 243 to 263 (MSMG…LWVW).

This sequence belongs to the Lgt family.

The protein resides in the cell inner membrane. It carries out the reaction L-cysteinyl-[prolipoprotein] + a 1,2-diacyl-sn-glycero-3-phospho-(1'-sn-glycerol) = an S-1,2-diacyl-sn-glyceryl-L-cysteinyl-[prolipoprotein] + sn-glycerol 1-phosphate + H(+). The protein operates within protein modification; lipoprotein biosynthesis (diacylglyceryl transfer). Its function is as follows. Catalyzes the transfer of the diacylglyceryl group from phosphatidylglycerol to the sulfhydryl group of the N-terminal cysteine of a prolipoprotein, the first step in the formation of mature lipoproteins. The polypeptide is Phosphatidylglycerol--prolipoprotein diacylglyceryl transferase (Paracidovorax citrulli (strain AAC00-1) (Acidovorax citrulli)).